The chain runs to 726 residues: Dipeptidyl-peptidase 5 (726 aa).

The signal sequence occupies residues 1–19 (MAAAKWLIASLAFASSGLA). Residues asparagine 96 and asparagine 252 are each glycosylated (N-linked (GlcNAc...) asparagine). Residues 269 to 291 (AEPINKRNGPRTPQGIEGASSSP) are disordered. Serine 558 acts as the Charge relay system in catalysis. Asparagine 605 is a glycosylation site (N-linked (GlcNAc...) asparagine). Active-site charge relay system residues include aspartate 641 and histidine 673. The N-linked (GlcNAc...) asparagine glycan is linked to asparagine 699.

It belongs to the peptidase S9C family.

Its subcellular location is the secreted. The sequence is that of Dipeptidyl-peptidase 5 (DPPV) from Arthroderma benhamiae (Trichophyton mentagrophytes).